We begin with the raw amino-acid sequence, 49 residues long: Large ribosomal subunit protein bL36 (49 aa).

This sequence belongs to the bacterial ribosomal protein bL36 family.

In Delftia acidovorans (strain DSM 14801 / SPH-1), this protein is Large ribosomal subunit protein bL36.